Consider the following 184-residue polypeptide: Large ribosomal subunit protein uL6 (184 aa).

The protein belongs to the universal ribosomal protein uL6 family. Part of the 50S ribosomal subunit.

In terms of biological role, this protein binds to the 23S rRNA, and is important in its secondary structure. It is located near the subunit interface in the base of the L7/L12 stalk, and near the tRNA binding site of the peptidyltransferase center. This is Large ribosomal subunit protein uL6 from Thermotoga petrophila (strain ATCC BAA-488 / DSM 13995 / JCM 10881 / RKU-1).